A 256-amino-acid chain; its full sequence is Small ribosomal subunit protein eS1 (256 aa).

The segment covering 1–18 (MAVGKNKRLSKGKKGLKK) has biased composition (basic residues). A disordered region spans residues 1-22 (MAVGKNKRLSKGKKGLKKKTQD). Alanine 2 is subject to N-acetylalanine; partial.

This sequence belongs to the eukaryotic ribosomal protein eS1 family. Component of the small ribosomal subunit (SSU). Mature N.crassa ribosomes consist of a small (40S) and a large (60S) subunit. The 40S small subunit contains 1 molecule of ribosomal RNA (18S rRNA) and at least 32 different proteins. The large 60S subunit contains 3 rRNA molecules (26S, 5.8S and 5S rRNA) and at least 42 different proteins.

It localises to the cytoplasm. In terms of biological role, component of the ribosome, a large ribonucleoprotein complex responsible for the synthesis of proteins in the cell. The small ribosomal subunit (SSU) binds messenger RNAs (mRNAs) and translates the encoded message by selecting cognate aminoacyl-transfer RNA (tRNA) molecules. The large subunit (LSU) contains the ribosomal catalytic site termed the peptidyl transferase center (PTC), which catalyzes the formation of peptide bonds, thereby polymerizing the amino acids delivered by tRNAs into a polypeptide chain. The nascent polypeptides leave the ribosome through a tunnel in the LSU and interact with protein factors that function in enzymatic processing, targeting, and the membrane insertion of nascent chains at the exit of the ribosomal tunnel. The chain is Small ribosomal subunit protein eS1 (rps1) from Neurospora crassa (strain ATCC 24698 / 74-OR23-1A / CBS 708.71 / DSM 1257 / FGSC 987).